The sequence spans 480 residues: MNASEFRRRGKEMVDYVANYLEGIESRLVYPDVEPGYLRPLIPSSAPEEPETYEDIIGDIERIIMPGVTHWNSPYFFAYFPTANSYPSMLADMLCGAISCIGFSWAASPACTELETVMLDWLGKMLRLPDAFLAGNAGMGGGVIQGSASEATLVALLAARTKVIRRLQAASPELTQAAIMEKLVAYASDQAHSSVERAGLIGGVRMKLIPSDSNFAMRASALREALERDKAAGLIPFFVVATLGTTNCCSFDSLLEVGPICNQEEMWLHIDAAYAGSAFICPEFRHLLDGVEFADSFNFNPHKWLLVNFDCSAMWVKQRTDLIGAFKLDPVYLKHGHQDSGLITDYRHWQIPLGRRFRSLKMWFVFRMYGIKGLQAHIRKHVQLAHEFESLVRQDPRFEICMEVTLGLVCFRLKGSNQLNETLLKRINSARKIHLVPCHLRDKFVLRFRICSRQVESDHVQQAWQHIRQLASSVLRLERA.

Met1 carries the N-acetylmethionine modification. 2 repeat units span residues 58-115 and 118-178. The segment at 58–178 is 2 X approximate tandem repeats; it reads GDIERIIMPG…AASPELTQAA (121 aa). Thr82 is a substrate binding site. The pyridoxal 5'-phosphate site is built by Ala148 and Ser149. A substrate-binding site is contributed by His192. 2 residues coordinate pyridoxal 5'-phosphate: Thr246 and Asn300. Lys303 bears the N6-(pyridoxal phosphate)lysine mark.

This sequence belongs to the group II decarboxylase family. As to quaternary structure, homodimer. Pyridoxal 5'-phosphate serves as cofactor.

It catalyses the reaction L-dopa + H(+) = dopamine + CO2. The catalysed reaction is 5-hydroxy-L-tryptophan + H(+) = serotonin + CO2. The protein operates within catecholamine biosynthesis; dopamine biosynthesis; dopamine from L-tyrosine: step 2/2. Its function is as follows. Catalyzes the decarboxylation of L-3,4-dihydroxyphenylalanine (DOPA) to dopamine and L-5-hydroxytryptophan to serotonin. In Cavia porcellus (Guinea pig), this protein is Aromatic-L-amino-acid decarboxylase (DDC).